The chain runs to 926 residues: Coatomer subunit beta'-2 (926 aa).

WD repeat units follow at residues 13-52, 55-94, 97-136, 140-180, 183-224, 227-266, 269-309, 351-390, and 461-501; these read QRSE…MAKS, VTEL…KVKV, AHSD…ACTQ, GHSH…PNFT, AHQK…CVQT, GHTH…LENT, YGLE…ASMD, TCDL…RSFG, and RIDV…SHFD. A disordered region spans residues 847–926; sequence EEESLENGDM…GTNNEGNPSA (80 aa). Residues 868-887 show a composition bias toward basic and acidic residues; the sequence is NEQRNEDDVAEHVEEHHEEK. Positions 888-900 are enriched in acidic residues; it reads EAEEEEGIVDGDS. Residues 917-926 are compositionally biased toward polar residues; it reads GTNNEGNPSA.

This sequence belongs to the WD repeat COPB2 family. In terms of assembly, oligomeric complex that consists of at least the alpha, beta, beta', gamma, delta, epsilon and zeta subunits.

It is found in the cytoplasm. The protein resides in the golgi apparatus membrane. Its subcellular location is the cytoplasmic vesicle. It localises to the COPI-coated vesicle membrane. In terms of biological role, the coatomer is a cytosolic protein complex that binds to dilysine motifs and reversibly associates with Golgi non-clathrin-coated vesicles, which further mediate biosynthetic protein transport from the ER, via the Golgi up to the trans Golgi network. Coatomer complex is required for budding from Golgi membranes, and is essential for the retrograde Golgi-to-ER transport of dilysine-tagged proteins. This Arabidopsis thaliana (Mouse-ear cress) protein is Coatomer subunit beta'-2.